Consider the following 118-residue polypeptide: Putative pterin-4-alpha-carbinolamine dehydratase (118 aa).

It belongs to the pterin-4-alpha-carbinolamine dehydratase family.

The enzyme catalyses (4aS,6R)-4a-hydroxy-L-erythro-5,6,7,8-tetrahydrobiopterin = (6R)-L-erythro-6,7-dihydrobiopterin + H2O. This is Putative pterin-4-alpha-carbinolamine dehydratase from Stutzerimonas stutzeri (strain A1501) (Pseudomonas stutzeri).